A 486-amino-acid chain; its full sequence is NADH-ubiquinone oxidoreductase chain 4 (486 aa).

13 helical membrane passes run 26–46, 76–96, 113–132, 134–156, 165–185, 209–231, 239–259, 271–291, 298–318, 329–349, 372–392, 407–427, and 452–472; these read HFYLFASNLLLLFIVVLYINF, GLLFGIDGLSLTFILLTVLLI, LYYTLVLAIGLVILLNFWAL, YISFYILFEATLPLLFILIHIYG, FYVLMFTLSGSLFMLLSIVVI, IIWLGLFIAIMVKTPLFPIHVWL, PLAGSMILAGLILKLALYAIL, ILYTPMIYIISLLTIILTSLA, LKVIIAYSSISHMGIAILGVC, IVLGVAHGFVSPALFLIVGGI, LATYIIILSFANIGTPLTGNF, PIIGGISCISVLLAAIYQLKL, and FIMNILIISTLIIGICPQIMY.

This sequence belongs to the complex I subunit 4 family. In terms of assembly, complex I is composed of 37 different subunits.

It localises to the mitochondrion membrane. The enzyme catalyses a ubiquinone + NADH + 5 H(+)(in) = a ubiquinol + NAD(+) + 4 H(+)(out). Its function is as follows. Core subunit of the mitochondrial membrane respiratory chain NADH dehydrogenase (Complex I) that is believed to belong to the minimal assembly required for catalysis. Complex I functions in the transfer of electrons from NADH to the respiratory chain. The immediate electron acceptor for the enzyme is believed to be ubiquinone. The sequence is that of NADH-ubiquinone oxidoreductase chain 4 (ND4) from Yarrowia lipolytica (strain CLIB 122 / E 150) (Yeast).